The sequence spans 316 residues: MIKLGIVMDPIANINIKKDSSFAMLLEAQRRGYELHYMEMGDLYLINGEARAHTRTLNVKQNYEEWFSFVGEQDLPLADLDVILMRKDPPFDTEFIYATYILERAEEKGTLIVNKPQSLRDCNEKLFTAWFSDLTPETLVTRNKAQLKAFWEKHSDIILKPLDGMGGASIFRVKEGDPNLGVIAETLTEHGTRYCMAQNYLPAIKDGDKRVLVVDGEPVPYCLARIPQGGETRGNLAAGGRGEPRPLTESDWKIARQIGPTLKEKGLIFVGLDIIGDRLTEINVTSPTCIREIEAEFPVSITGMLMDAIEARLQQQ.

Residues 125–310 (KLFTAWFSDL…ITGMLMDAIE (186 aa)) form the ATP-grasp domain. Position 151–207 (151–207 (WEKHSDIILKPLDGMGGASIFRVKEGDPNLGVIAETLTEHGTRYCMAQNYLPAIKDG)) interacts with ATP. Mg(2+) is bound by residues Glu281 and Asn283.

The protein belongs to the prokaryotic GSH synthase family. In terms of assembly, homotetramer. It depends on Mg(2+) as a cofactor. Mn(2+) is required as a cofactor.

The catalysed reaction is gamma-L-glutamyl-L-cysteine + glycine + ATP = glutathione + ADP + phosphate + H(+). Its pathway is sulfur metabolism; glutathione biosynthesis; glutathione from L-cysteine and L-glutamate: step 2/2. Inhibited by 7,8-dihydrofolate, methotrexate and trimethoprim. This chain is Glutathione synthetase (gshB), found in Escherichia coli (strain K12).